The primary structure comprises 878 residues: Phosphoenolpyruvate carboxylase (878 aa).

Active-site residues include His-140 and Lys-545.

This sequence belongs to the PEPCase type 1 family. Mg(2+) is required as a cofactor.

The enzyme catalyses oxaloacetate + phosphate = phosphoenolpyruvate + hydrogencarbonate. Its function is as follows. Forms oxaloacetate, a four-carbon dicarboxylic acid source for the tricarboxylic acid cycle. This is Phosphoenolpyruvate carboxylase from Pseudomonas paraeruginosa (strain DSM 24068 / PA7) (Pseudomonas aeruginosa (strain PA7)).